Here is a 119-residue protein sequence, read N- to C-terminus: Large ribosomal subunit protein bL20c (119 aa).

Belongs to the bacterial ribosomal protein bL20 family.

The protein localises to the plastid. It is found in the chloroplast. In terms of biological role, binds directly to 23S ribosomal RNA and is necessary for the in vitro assembly process of the 50S ribosomal subunit. It is not involved in the protein synthesizing functions of that subunit. In Oedogonium cardiacum (Filamentous green alga), this protein is Large ribosomal subunit protein bL20c.